The sequence spans 518 residues: Mitochondrial 2-methylisocitrate lyase (518 aa).

The protein belongs to the isocitrate lyase/PEP mutase superfamily. Isocitrate lyase family.

The protein resides in the mitochondrion matrix. It is found in the cytoplasm. It carries out the reaction (2S,3R)-3-hydroxybutane-1,2,3-tricarboxylate = pyruvate + succinate. The protein operates within organic acid metabolism; propanoate degradation. Functionally, catalyzes the formation of pyruvate and succinate from 2-methylisocitrate during the metabolism of endogenous propionyl-CoA. Does not act on isocitrate. The polypeptide is Mitochondrial 2-methylisocitrate lyase (icl2) (Schizosaccharomyces pombe (strain 972 / ATCC 24843) (Fission yeast)).